A 1427-amino-acid polypeptide reads, in one-letter code: ATP-binding cassette transporter abc1 (1427 aa).

Residues 26-46 (LLLFYLSLFSLTNLFLIQKLF) traverse the membrane as a helical segment. The N-linked (GlcNAc...) asparagine glycan is linked to N49. 9 helical membrane passes run 63 to 83 (CLLE…SFYL), 87 to 107 (AVWW…NILS), 115 to 135 (LFSW…LISI), 155 to 175 (LLLP…PLFF), 197 to 217 (CSIF…WKSW), 262 to 282 (ILLM…TPLA), 298 to 318 (GNSP…ASVV), 345 to 367 (VLTS…YVYN), and 397 to 417 (MYFL…LAIL). The ABC transmembrane type-1 1 domain maps to 262–549 (ILLMVFLSVL…LASVSRQFIQ (288 aa)). N437 is a glycosylation site (N-linked (GlcNAc...) asparagine). The next 2 membrane-spanning stretches (helical) occupy residues 489–509 (IIFK…TFAI) and 513–533 (IMGH…FGLL). Residues N567, N581, and N601 are each glycosylated (N-linked (GlcNAc...) asparagine). The ABC transporter 1 domain maps to 579–807 (FENTSLSWSP…PSTFFSSNTK (229 aa)). A helical transmembrane segment spans residues 609-629 (FTLVVGSTGSGKSTLAMALLG). 614-621 (GSTGSGKS) lines the ATP pocket. Residues N658 and N703 are each glycosylated (N-linked (GlcNAc...) asparagine). The helical transmembrane segment at 760 to 780 (IILFTHNVSLCLPIAENVIVL) threads the bilayer. N782 and N842 each carry an N-linked (GlcNAc...) asparagine glycan. In terms of domain architecture, ABC transmembrane type-1 2 spans 862 to 1142 (ILGSILLVMM…FVRANNEILT (281 aa)). 3 consecutive transmembrane segments (helical) span residues 866–886 (ILLV…IALW), 896–916 (LPSS…YFLM), and 973–993 (LLWA…ITML). A glycan (N-linked (GlcNAc...) asparagine) is linked at N994. 3 consecutive transmembrane segments (helical) span residues 995-1015 (VTLV…LVYL), 1086-1106 (LAIR…LIAL), and 1114-1134 (GLVG…LVFV). N-linked (GlcNAc...) asparagine glycosylation is found at N1161 and N1184. One can recognise an ABC transporter 2 domain in the interval 1180–1422 (VSIKNLTVSY…RRAFWKMCKE (243 aa)). An ATP-binding site is contributed by 1214-1221 (GRTGSGKS). A helical membrane pass occupies residues 1223 to 1243 (MGLTLLRFTMIMSGAVEVDGI). The N-linked (GlcNAc...) asparagine glycan is linked to N1324.

The protein belongs to the ABC transporter superfamily. ABCC family. Conjugate transporter (TC 3.A.1.208) subfamily.

It localises to the membrane. This Schizosaccharomyces pombe (strain 972 / ATCC 24843) (Fission yeast) protein is ATP-binding cassette transporter abc1 (abc1).